A 475-amino-acid chain; its full sequence is UDP-N-acetylmuramoylalanine--D-glutamate ligase (475 aa).

130–136 lines the ATP pocket; it reads GTNGKTT.

Belongs to the MurCDEF family.

The protein resides in the cytoplasm. It carries out the reaction UDP-N-acetyl-alpha-D-muramoyl-L-alanine + D-glutamate + ATP = UDP-N-acetyl-alpha-D-muramoyl-L-alanyl-D-glutamate + ADP + phosphate + H(+). It participates in cell wall biogenesis; peptidoglycan biosynthesis. Cell wall formation. Catalyzes the addition of glutamate to the nucleotide precursor UDP-N-acetylmuramoyl-L-alanine (UMA). The chain is UDP-N-acetylmuramoylalanine--D-glutamate ligase from Corynebacterium diphtheriae (strain ATCC 700971 / NCTC 13129 / Biotype gravis).